The sequence spans 227 residues: 7-cyano-7-deazaguanine synthase (227 aa).

16 to 26 serves as a coordination point for ATP; the sequence is FSGGQDSTTCL. Residues cysteine 194, cysteine 202, cysteine 205, and cysteine 208 each contribute to the Zn(2+) site.

The protein belongs to the QueC family. Zn(2+) serves as cofactor.

It catalyses the reaction 7-carboxy-7-deazaguanine + NH4(+) + ATP = 7-cyano-7-deazaguanine + ADP + phosphate + H2O + H(+). The protein operates within purine metabolism; 7-cyano-7-deazaguanine biosynthesis. Its function is as follows. Catalyzes the ATP-dependent conversion of 7-carboxy-7-deazaguanine (CDG) to 7-cyano-7-deazaguanine (preQ(0)). In Haemophilus influenzae (strain 86-028NP), this protein is 7-cyano-7-deazaguanine synthase.